Here is a 314-residue protein sequence, read N- to C-terminus: Ribosomal protein uL3 glutamine methyltransferase (314 aa).

The protein belongs to the protein N5-glutamine methyltransferase family. PrmB subfamily.

It catalyses the reaction L-glutaminyl-[ribosomal protein uL3] + S-adenosyl-L-methionine = N(5)-methyl-L-glutaminyl-[ribosomal protein uL3] + S-adenosyl-L-homocysteine + H(+). Methylates large ribosomal subunit protein uL3 on a specific glutamine residue. The protein is Ribosomal protein uL3 glutamine methyltransferase of Vibrio cholerae serotype O1 (strain ATCC 39315 / El Tor Inaba N16961).